Here is a 339-residue protein sequence, read N- to C-terminus: Ketol-acid reductoisomerase (NADP(+)) (339 aa).

A KARI N-terminal Rossmann domain is found at 1-182 (MKVYYDADCD…GGGRSGIIET (182 aa)). Residues 24 to 27 (YGSQ), R48, S51, S53, and 83 to 86 (DEHQ) each bind NADP(+). H108 is a catalytic residue. NADP(+) is bound at residue G134. Residues 183-328 (NFREECETDL…AKLRAMMPWI (146 aa)) form the KARI C-terminal knotted domain. Positions 191, 195, 227, and 231 each coordinate Mg(2+). S252 serves as a coordination point for substrate.

It belongs to the ketol-acid reductoisomerase family. Mg(2+) serves as cofactor.

It catalyses the reaction (2R)-2,3-dihydroxy-3-methylbutanoate + NADP(+) = (2S)-2-acetolactate + NADPH + H(+). It carries out the reaction (2R,3R)-2,3-dihydroxy-3-methylpentanoate + NADP(+) = (S)-2-ethyl-2-hydroxy-3-oxobutanoate + NADPH + H(+). Its pathway is amino-acid biosynthesis; L-isoleucine biosynthesis; L-isoleucine from 2-oxobutanoate: step 2/4. It functions in the pathway amino-acid biosynthesis; L-valine biosynthesis; L-valine from pyruvate: step 2/4. Functionally, involved in the biosynthesis of branched-chain amino acids (BCAA). Catalyzes an alkyl-migration followed by a ketol-acid reduction of (S)-2-acetolactate (S2AL) to yield (R)-2,3-dihydroxy-isovalerate. In the isomerase reaction, S2AL is rearranged via a Mg-dependent methyl migration to produce 3-hydroxy-3-methyl-2-ketobutyrate (HMKB). In the reductase reaction, this 2-ketoacid undergoes a metal-dependent reduction by NADPH to yield (R)-2,3-dihydroxy-isovalerate. This is Ketol-acid reductoisomerase (NADP(+)) from Novosphingobium aromaticivorans (strain ATCC 700278 / DSM 12444 / CCUG 56034 / CIP 105152 / NBRC 16084 / F199).